A 184-amino-acid polypeptide reads, in one-letter code: NADH-quinone oxidoreductase subunit B 1 (184 aa).

The [4Fe-4S] cluster site is built by C37, C38, C103, and C132.

The protein belongs to the complex I 20 kDa subunit family. In terms of assembly, NDH-1 is composed of 14 different subunits. Subunits NuoB, C, D, E, F, and G constitute the peripheral sector of the complex. The cofactor is [4Fe-4S] cluster.

Its subcellular location is the cell membrane. It catalyses the reaction a quinone + NADH + 5 H(+)(in) = a quinol + NAD(+) + 4 H(+)(out). Its function is as follows. NDH-1 shuttles electrons from NADH, via FMN and iron-sulfur (Fe-S) centers, to quinones in the respiratory chain. The immediate electron acceptor for the enzyme in this species is believed to be a menaquinone. Couples the redox reaction to proton translocation (for every two electrons transferred, four hydrogen ions are translocated across the cytoplasmic membrane), and thus conserves the redox energy in a proton gradient. This chain is NADH-quinone oxidoreductase subunit B 1, found in Streptomyces griseus subsp. griseus (strain JCM 4626 / CBS 651.72 / NBRC 13350 / KCC S-0626 / ISP 5235).